Reading from the N-terminus, the 158-residue chain is Ribosome maturation factor RimP (158 aa).

Belongs to the RimP family.

The protein resides in the cytoplasm. Its function is as follows. Required for maturation of 30S ribosomal subunits. The protein is Ribosome maturation factor RimP of Deinococcus radiodurans (strain ATCC 13939 / DSM 20539 / JCM 16871 / CCUG 27074 / LMG 4051 / NBRC 15346 / NCIMB 9279 / VKM B-1422 / R1).